Here is a 733-residue protein sequence, read N- to C-terminus: Ribosomal protein S6 kinase alpha-2 (733 aa).

One can recognise a Protein kinase 1 domain in the interval 59–318 (FELLKVLGQG…VEEIKRHPFF (260 aa)). ATP is bound by residues 65 to 73 (LGQGSYGKV) and Lys91. Asp184 (proton acceptor) is an active-site residue. Residue Ser218 is modified to Phosphoserine; by PDPK1. The AGC-kinase C-terminal domain maps to 319–388 (VTIDWNTLYR…VASSLIQEPS (70 aa)). Ser377 bears the Phosphoserine mark. The 258-residue stretch at 415 to 672 (YEIKEDIGVG…AMQVLKHPWV (258 aa)) folds into the Protein kinase 2 domain. Residues 421–429 (IGVGSYSVC) and Lys444 each bind ATP. The active-site Proton acceptor is the Asp532.

It belongs to the protein kinase superfamily. AGC Ser/Thr protein kinase family. S6 kinase subfamily. Forms a complex with either MAPK1/ERK2 or MAPK3/ERK1 in quiescent cells. Transiently dissociates following mitogenic stimulation. Interacts with FBXO5; cooperate to induce the metaphase arrest of early blastomeres; increases and stabilizes interaction of FBXO5 with CDC20. Mg(2+) is required as a cofactor. In terms of processing, activated by phosphorylation at Ser-218 by PDPK1. Autophosphorylated on Ser-377, as part of the activation process. May be phosphorylated at Thr-356 and Ser-360 by MAPK1/ERK2 and MAPK3/ERK1. Post-translationally, N-terminal myristoylation results in an activated kinase in the absence of added growth factors. In terms of tissue distribution, widely expressed with higher expression in lung, skeletal muscle, brain, uterus, ovary, thyroid and prostate.

The protein localises to the nucleus. Its subcellular location is the cytoplasm. It catalyses the reaction L-seryl-[protein] + ATP = O-phospho-L-seryl-[protein] + ADP + H(+). The catalysed reaction is L-threonyl-[protein] + ATP = O-phospho-L-threonyl-[protein] + ADP + H(+). Upon extracellular signal or mitogen stimulation, phosphorylated at Thr-570 in the C-terminal kinase domain (CTKD) by MAPK1/ERK2 and MAPK3/ERK1. The activated CTKD then autophosphorylates Ser-377, allowing binding of PDPK1, which in turn phosphorylates Ser-218 in the N-terminal kinase domain (NTDK) leading to the full activation of the protein and subsequent phosphorylation of the substrates by the NTKD. Functionally, serine/threonine-protein kinase that acts downstream of ERK (MAPK1/ERK2 and MAPK3/ERK1) signaling and mediates mitogenic and stress-induced activation of transcription factors, regulates translation, and mediates cellular proliferation, survival, and differentiation. May function as tumor suppressor in epithelial ovarian cancer cells. The polypeptide is Ribosomal protein S6 kinase alpha-2 (RPS6KA2) (Homo sapiens (Human)).